We begin with the raw amino-acid sequence, 47 residues long: Capistruin (47 aa).

A propeptide spanning residues 1–28 (MVRLLAKLLRSTIHGSNGVSLDAVSSTH) is cleaved from the precursor. A cross-link (isoaspartyl glycine isopeptide (Gly-Asp)) is located at residues 29–37 (GTPGFQTPD).

In terms of processing, it is assumed that the two processing enzymes CapB/CapC convert the precursor protein CapA into the mature lasso peptide capistruin. CapB is assumed to cleave the precursor protein CapA and to set an N-terminal Gly free, whose a-NH2 group acts as the nucleophile in the subsequent cyclization reaction. CapC is most likely involved in the side-chain carboxyl group activation of aspartic acid at position 9 generating the electrophile for the condensation reaction. CapD may export capistruin outside of the producing cells.

Its subcellular location is the secreted. Its function is as follows. Peptide antibiotic that functions through inhibition of the bacterial DNA-dependent RNA polymerase (RNAP). Inhibits transcription by binding in RNAP secondary channel, where it sterically blocks the folding of the trigger loop, which is essential for efficient catalysis. In contrast to MccJ25, does not restrict access of nucleotide substrates to the catalytic center and shows a non-competitive mode of inhibition. Shows activity against closely related Gram-negative Burkholderia and Pseudomonas strains. Is not active against Gram-positive bacteria. In Burkholderia thailandensis (strain ATCC 700388 / DSM 13276 / CCUG 48851 / CIP 106301 / E264), this protein is Capistruin.